Consider the following 292-residue polypeptide: Malonyl-S-ACP:biotin-protein carboxyltransferase MADD (292 aa).

The 281-residue stretch at 1 to 281 folds into the CoA carboxyltransferase C-terminal domain; the sequence is MEIMMGQGRL…RGKVMAMMDK (281 aa).

It is found in the cytoplasm. It catalyses the reaction N(6)-biotinyl-L-lysyl-[protein] + malonyl-[ACP] = N(6)-carboxybiotinyl-L-lysyl-[protein] + acetyl-[ACP]. Functionally, gamma subunit of the biotin-dependent malonate decarboxylase multienzyme complex (EC 7.2.4.4). The two subunits MADC and MADD are required for the transfer of the malonate carboxy group from the acyl-carrier protein (ACP) to the prosthetic group of the biotin carrier MADF. Required for the regeneration of ACP. The chain is Malonyl-S-ACP:biotin-protein carboxyltransferase MADD (madD) from Malonomonas rubra.